Reading from the N-terminus, the 179-residue chain is TPD1 protein homolog 1 (179 aa).

The signal sequence occupies residues 1-30 (MRMEHIYKFQHWLFFIGLGVLLSLSLSVKA).

In Arabidopsis thaliana (Mouse-ear cress), this protein is TPD1 protein homolog 1.